Here is a 175-residue protein sequence, read N- to C-terminus: Inorganic pyrophosphatase (175 aa).

Substrate is bound by residues Lys29, Arg43, and Tyr55. Residues Asp65, Asp70, and Asp102 each contribute to the Mg(2+) site. Residue Tyr141 coordinates substrate.

This sequence belongs to the PPase family. In terms of assembly, homohexamer. Mg(2+) serves as cofactor.

It is found in the cytoplasm. The catalysed reaction is diphosphate + H2O = 2 phosphate + H(+). Catalyzes the hydrolysis of inorganic pyrophosphate (PPi) forming two phosphate ions. This Rickettsia bellii (strain RML369-C) protein is Inorganic pyrophosphatase.